Consider the following 273-residue polypeptide: MMKTLSSLLLLFSVSLQAAPIERVISLAPHATEIAYAAGLGDKLIAVSEMSDYPEAAKKLEKVSNYKGINLEKIITLKPDLILAWPAGNPAKELEKLEQFGFKIYYSQTKSLKDIGDNIEQLSQYSDDPQIGLNNARDYRTHLEALRAKYQNLPKTRYFYQLSDTPIITVAGQNWPTEVFRFCGGENVFDGASAPYPQVSIEQVILKRPQAMFVSPHAIQNNGMWSPWVEEIPALKNAHFWQLNSDWLNRPTPRTLLAIEQVCEHFASIEQKR.

Positions 1-18 are cleaved as a signal peptide; the sequence is MMKTLSSLLLLFSVSLQA. The Fe/B12 periplasmic-binding domain occupies 23-273; that stretch reads RVISLAPHAT…EHFASIEQKR (251 aa). An intrachain disulfide couples Cys183 to Cys263.

The protein belongs to the BtuF family. As to quaternary structure, the complex is composed of two ATP-binding proteins (BtuD), two transmembrane proteins (BtuC) and a solute-binding protein (BtuF).

It is found in the periplasm. Its function is as follows. Part of the ABC transporter complex BtuCDF involved in vitamin B12 import. Binds vitamin B12 and delivers it to the periplasmic surface of BtuC. This Vibrio vulnificus (strain YJ016) protein is Vitamin B12-binding protein.